The chain runs to 192 residues: Ion-translocating oxidoreductase complex subunit A (192 aa).

Transmembrane regions (helical) follow at residues 5–25 (LLLL…FLGL), 39–59 (IGMS…SYLV), 65–85 (LPFD…AVVV), 102–122 (ALGI…VALL), 134–154 (AIFG…FSAM), and 171–191 (AIAM…TGLV).

It belongs to the NqrDE/RnfAE family. In terms of assembly, the complex is composed of six subunits: RnfA, RnfB, RnfC, RnfD, RnfE and RnfG.

The protein localises to the cell inner membrane. Functionally, part of a membrane-bound complex that couples electron transfer with translocation of ions across the membrane. The sequence is that of Ion-translocating oxidoreductase complex subunit A from Shewanella piezotolerans (strain WP3 / JCM 13877).